Here is a 330-residue protein sequence, read N- to C-terminus: tRNA U34 carboxymethyltransferase (330 aa).

Carboxy-S-adenosyl-L-methionine-binding positions include lysine 91, tryptophan 105, lysine 110, glycine 130, 152 to 154, 181 to 182, methionine 196, tyrosine 200, and arginine 315; these read DPS and IE.

The protein belongs to the class I-like SAM-binding methyltransferase superfamily. CmoB family. In terms of assembly, homotetramer.

The enzyme catalyses carboxy-S-adenosyl-L-methionine + 5-hydroxyuridine(34) in tRNA = 5-carboxymethoxyuridine(34) in tRNA + S-adenosyl-L-homocysteine + H(+). Functionally, catalyzes carboxymethyl transfer from carboxy-S-adenosyl-L-methionine (Cx-SAM) to 5-hydroxyuridine (ho5U) to form 5-carboxymethoxyuridine (cmo5U) at position 34 in tRNAs. This chain is tRNA U34 carboxymethyltransferase, found in Shewanella amazonensis (strain ATCC BAA-1098 / SB2B).